A 198-amino-acid chain; its full sequence is Endoribonuclease YbeY (198 aa).

Residues histidine 156, histidine 160, and histidine 166 each coordinate Zn(2+).

It belongs to the endoribonuclease YbeY family. Zn(2+) serves as cofactor.

It is found in the cytoplasm. Functionally, single strand-specific metallo-endoribonuclease involved in late-stage 70S ribosome quality control and in maturation of the 3' terminus of the 16S rRNA. The chain is Endoribonuclease YbeY from Cupriavidus necator (strain ATCC 17699 / DSM 428 / KCTC 22496 / NCIMB 10442 / H16 / Stanier 337) (Ralstonia eutropha).